A 2664-amino-acid polypeptide reads, in one-letter code: Inositol 1,4,5-trisphosphate-gated calcium channel ITPR3 (2664 aa).

Over methionine 1–leucine 2227 the chain is Cytoplasmic. MIR domains lie at glycine 113–asparagine 173, glycine 174–phenylalanine 224, glutamate 232–valine 288, glycine 295–threonine 372, and aspartate 378–valine 434. 1D-myo-inositol 1,4,5-trisphosphate is bound by residues arginine 266, threonine 268, leucine 269, and arginine 270. The tract at residues asparagine 320–arginine 344 is disordered. 1D-myo-inositol 1,4,5-trisphosphate is bound by residues arginine 503, lysine 507, arginine 510, tyrosine 567, arginine 568, and lysine 569. Arginine 743 is a binding site for Ca(2+). A phosphoserine mark is found at serine 909 and serine 927. Residues glutamate 1115 and glutamate 1118 each contribute to the Ca(2+) site. Disordered regions lie at residues lysine 1124–serine 1158 and glutamine 1790–arginine 1850. The segment covering glutamate 1792–glycine 1805 has biased composition (polar residues). Residues serine 1806, serine 1825, and serine 1827 each carry the phosphoserine modification. Positions 1875 and 1939 each coordinate Ca(2+). Alanine 1989, glutamate 2142, and lysine 2145 together coordinate ATP. A helical transmembrane segment spans residues glycine 2228–phenylalanine 2248. The Extracellular portion of the chain corresponds to threonine 2249–proline 2256. Residues leucine 2257–isoleucine 2277 traverse the membrane as a helical segment. Residues leucine 2278–lysine 2286 are Cytoplasmic-facing. The helical transmembrane segment at isoleucine 2287–tyrosine 2304 threads the bilayer. Topologically, residues lysine 2305–glycine 2318 are extracellular. Residues tyrosine 2319–phenylalanine 2339 traverse the membrane as a helical segment. Residues aspartate 2340–serine 2361 are Cytoplasmic-facing. The helical transmembrane segment at isoleucine 2362–leucine 2382 threads the bilayer. Over phenylalanine 2383–tyrosine 2489 the chain is Extracellular. Cysteine 2448 and cysteine 2454 are disulfide-bonded. A helical membrane pass occupies residues aspartate 2490–isoleucine 2510. Residues aspartate 2511–arginine 2664 are Cytoplasmic-facing. Positions 2531 and 2532 each coordinate ATP. Zn(2+) is bound at residue cysteine 2531. Zn(2+)-binding residues include cysteine 2534 and histidine 2551. ATP contacts are provided by lysine 2553, histidine 2556, asparagine 2557, and methionine 2558. Zn(2+) is bound at residue histidine 2556. Position 2574 (threonine 2574) interacts with Ca(2+). Phosphoserine is present on residues serine 2602 and serine 2663.

It belongs to the InsP3 receptor family. As to quaternary structure, homotetramer. Homodimer. Interacts with TRPC1, TRPC3 and TRPC4. Interacts with TRPV4. Interacts with SIGMAR1. Interacts with PML and AKT1. Interacts with IRAG2 (via coiled-coil domain). Interacts with CABP1. Interacts with TMBIM4/LFG4. Interacts with CEMIP. Interacts with TESPA1. Interacts with TMEM203. Interacts with BOK; regulates ITPR3 expression. Interacts with BCL2L10. Interacts with CHGA and CHGB. In terms of processing, phosphorylated by AKT1 on serine and/or threonine residues.

It is found in the endoplasmic reticulum membrane. It localises to the cytoplasmic vesicle. The protein localises to the secretory vesicle membrane. The enzyme catalyses Ca(2+)(in) = Ca(2+)(out). With respect to regulation, inositol 1,4,5-trisphosphate-gated calcium channel is regulated by cytosolic calcium in a biphasic manner. At low concentrations, cytosolic calcium binds at a high-affinity juxtamembrane domain (JD) calcium binding site, allowing ITPR3 to activate by escaping a low-energy resting state through an ensemble of preactivated states. At high cytosolic calcium concentrations, ITPR3 preferentially enters an inhibited state stabilized by calcium binding at a second, low-affinity cytoplasmic domain (CD) calcium binding site. Inositol 1,4,5-trisphosphate-gated calcium channel that, upon 1D-myo-inositol 1,4,5-trisphosphate binding, transports calcium from the endoplasmic reticulum lumen to cytoplasm, thus releasing the intracellular calcium and therefore participates in cellular calcium ion homeostasis. 1D-myo-inositol 1,4,5-trisphosphate binds to the ligand-free channel without altering its global conformation, yielding the low-energy resting state, then progresses through resting-to preactivated transitions to the higher energy preactivated state, which increases affinity for calcium, promoting binding of the low basal cytosolic calcium at the juxtamembrane domain (JD) site, favoring the transition through the ensemble of high-energy intermediate states along the trajectory to the fully-open activated state. Upon opening, releases calcium in the cytosol where it can bind to the low-affinity cytoplasmic domain (CD) site and stabilizes the inhibited state to terminate calcium release. The protein is Inositol 1,4,5-trisphosphate-gated calcium channel ITPR3 of Bos taurus (Bovine).